The sequence spans 45 residues: DNA-directed RNA polymerase subunit Rpo12 (45 aa).

Zn(2+) is bound by residues Cys-8, Cys-23, and Cys-26.

This sequence belongs to the archaeal Rpo12/eukaryotic RPC10 RNA polymerase subunit family. As to quaternary structure, part of the RNA polymerase complex. Requires Zn(2+) as cofactor.

Its subcellular location is the cytoplasm. It catalyses the reaction RNA(n) + a ribonucleoside 5'-triphosphate = RNA(n+1) + diphosphate. Functionally, DNA-dependent RNA polymerase (RNAP) catalyzes the transcription of DNA into RNA using the four ribonucleoside triphosphates as substrates. The protein is DNA-directed RNA polymerase subunit Rpo12 of Methanocella arvoryzae (strain DSM 22066 / NBRC 105507 / MRE50).